Reading from the N-terminus, the 133-residue chain is Large ribosomal subunit protein bL19 (133 aa).

This sequence belongs to the bacterial ribosomal protein bL19 family.

This protein is located at the 30S-50S ribosomal subunit interface and may play a role in the structure and function of the aminoacyl-tRNA binding site. The polypeptide is Large ribosomal subunit protein bL19 (Sulfurihydrogenibium sp. (strain YO3AOP1)).